Here is a 243-residue protein sequence, read N- to C-terminus: Ribonuclease PH (243 aa).

Residues R91 and 129–131 (GTR) each bind phosphate.

It belongs to the RNase PH family. Homohexameric ring arranged as a trimer of dimers.

The enzyme catalyses tRNA(n+1) + phosphate = tRNA(n) + a ribonucleoside 5'-diphosphate. Its function is as follows. Phosphorolytic 3'-5' exoribonuclease that plays an important role in tRNA 3'-end maturation. Removes nucleotide residues following the 3'-CCA terminus of tRNAs; can also add nucleotides to the ends of RNA molecules by using nucleoside diphosphates as substrates, but this may not be physiologically important. Probably plays a role in initiation of 16S rRNA degradation (leading to ribosome degradation) during starvation. This is Ribonuclease PH from Burkholderia thailandensis (strain ATCC 700388 / DSM 13276 / CCUG 48851 / CIP 106301 / E264).